The following is a 346-amino-acid chain: Large ribosomal subunit protein uL3 (346 aa).

Residues K324 to Q346 are disordered.

Belongs to the universal ribosomal protein uL3 family. In terms of assembly, part of the 50S ribosomal subunit. Forms a cluster with proteins L14 and L24e.

In terms of biological role, one of the primary rRNA binding proteins, it binds directly near the 3'-end of the 23S rRNA, where it nucleates assembly of the 50S subunit. The chain is Large ribosomal subunit protein uL3 from Thermococcus gammatolerans (strain DSM 15229 / JCM 11827 / EJ3).